Reading from the N-terminus, the 246-residue chain is Small ribosomal subunit protein uS2 (246 aa).

Belongs to the universal ribosomal protein uS2 family.

This is Small ribosomal subunit protein uS2 from Azotobacter vinelandii (strain DJ / ATCC BAA-1303).